The sequence spans 70 residues: Gas vesicle protein A (70 aa).

Belongs to the gas vesicle GvpA family. The gas vesicle shell is 2 nm thick and consists of a single layer of this protein. It forms helical ribs nearly perpendicular to the long axis of the vesicle.

The protein localises to the gas vesicle shell. Its function is as follows. Gas vesicles are hollow, gas filled proteinaceous nanostructures found in some microorganisms. During planktonic growth they allow positioning of the organism at a favorable depth for light or nutrient acquisition. GvpA forms the protein shell. The chain is Gas vesicle protein A from Cereibacter sphaeroides (strain ATCC 17023 / DSM 158 / JCM 6121 / CCUG 31486 / LMG 2827 / NBRC 12203 / NCIMB 8253 / ATH 2.4.1.) (Rhodobacter sphaeroides).